A 475-amino-acid chain; its full sequence is Mitochondrial adenyl nucleotide antiporter SLC25A24 (475 aa).

Residues 1-173 (MLRWLRGFVL…RFWKHSTGID (173 aa)) form a regulatory N-terminal domain region. At 1–197 (MLRWLRGFVL…ERKSGQWWRQ (197 aa)) the chain is on the mitochondrial intermembrane side. EF-hand domains lie at 19–54 (EPPTRYETLFQALDRNGDGVVDIRELQEGLKSLGIP), 55–88 (LGQDAEEKIFTTGDVNKDGKLDFEEFMKYLKDHE), 86–121 (DHEKKMKLAFKSLDKNNDGKIEASEIVQSLQTLGLT), and 122–157 (ISEQQAELILQSIDADGTMTVDWNEWRDYFLFNPVA). Residues D32, N34, D36, V38, E43, D68, N70, D72, K74, E79, D99, N101, D103, K105, E110, D135, D137, T139, T141, and E146 each coordinate Ca(2+). A linker region region spans residues 159–168 (IEEIIRFWKH). The tract at residues 174–475 (IGDSLTIPDE…MKQTLGVTQK (302 aa)) is C-terminal transmembrane transporter domain. Solcar repeat units follow at residues 192-276 (GQWW…YKKL), 284-369 (IGTF…LKSH), and 381-469 (PGVL…MKQT). Residues 198–215 (LLAGGIAGAVSRTSTAPL) form a helical membrane-spanning segment. At 216-250 (DRLKVMMQVHGSKSMNIFGGFRQMIKEGGVRSLWR) the chain is on the mitochondrial matrix side. Residues 251–270 (GNGTNVIKIAPETAVKFWVY) traverse the membrane as a helical segment. At 271–293 (EQYKKLLTEEGQKIGTFERFISG) the chain is on the mitochondrial intermembrane side. The helical transmembrane segment at 294–307 (SMAGATAQTFIYPM) threads the bilayer. Residues 308–343 (EVMKTRLAVGKTGQYSGIYDCAKKILKYEGFGAFYK) lie on the Mitochondrial matrix side of the membrane. K318 carries the post-translational modification N6-acetyllysine; alternate. At K318 the chain carries N6-succinyllysine; alternate. At K334 the chain carries N6-acetyllysine. The helical transmembrane segment at 344–363 (GYVPNLLGIIPYAGIDLAVY) threads the bilayer. Over 364–386 (ELLKSHWLDNFAKDSVNPGVLVL) the chain is Mitochondrial intermembrane. Residues 387 to 404 (LGCGALSSTCGQLASYPL) traverse the membrane as a helical segment. The Mitochondrial matrix segment spans residues 405–443 (ALVRTRMQAQAMLEGAPQLNMVGLFRRIISKEGLPGLYR). K435 carries the post-translational modification N6-acetyllysine; alternate. K435 bears the N6-succinyllysine; alternate mark. Residues 444-463 (GITPNFMKVLPAVGISYVVY) traverse the membrane as a helical segment. The Mitochondrial intermembrane portion of the chain corresponds to 464 to 475 (ENMKQTLGVTQK).

This sequence belongs to the mitochondrial carrier (TC 2.A.29) family. Monomer. In terms of tissue distribution, mainly expressed in colon. Also expressed in the small intestine proximal to the ileum. Weakly expressed in kidney but not in the liver.

The protein localises to the mitochondrion inner membrane. The protein resides in the peroxisome membrane. It carries out the reaction Mg(2+)(out) + phosphate(in) + ATP(out) = Mg(2+)(in) + phosphate(out) + ATP(in). The enzyme catalyses ADP(out) + phosphate(in) + H(+)(out) = ADP(in) + phosphate(out) + H(+)(in). It catalyses the reaction AMP(out) + phosphate(in) = AMP(in) + phosphate(out). The catalysed reaction is phosphate(in) + ATP(out) + 2 H(+)(out) = phosphate(out) + ATP(in) + 2 H(+)(in). It carries out the reaction dADP(in) + ADP(out) = dADP(out) + ADP(in). The enzyme catalyses Mg(2+)(in) + ADP(out) + ATP(in) + H(+)(out) = Mg(2+)(out) + ADP(in) + ATP(out) + H(+)(in). It catalyses the reaction ADP(out) + diphosphate(in) = ADP(in) + diphosphate(out). The catalysed reaction is dAMP(in) + ADP(out) + H(+)(out) = dAMP(out) + ADP(in) + H(+)(in). It carries out the reaction 3'-AMP(in) + ADP(out) + H(+)(out) = 3'-AMP(out) + ADP(in) + H(+)(in). The enzyme catalyses dAMP(out) + phosphate(in) = dAMP(in) + phosphate(out). It catalyses the reaction 3'-AMP(out) + phosphate(in) = 3'-AMP(in) + phosphate(out). The catalysed reaction is dADP(out) + phosphate(in) + H(+)(out) = dADP(in) + phosphate(out) + H(+)(in). Its activity is regulated as follows. Activated by an increase in cytosolic calcium levels that induce a conformational change of the N-terminal regulatory domain, uncapping the channel and allowing transport. Inhibited by bathophenanthroline, mersalyl, p-hydroxymercuribenzoate, bromcresol purple and tannic acid. Electroneutral antiporter that mediates the transport of adenyl nucleotides through the inner mitochondrial membrane. Originally identified as an ATP-magnesium/inorganic phosphate antiporter, it also acts as a broad specificity adenyl nucleotide antiporter. By regulating the mitochondrial matrix adenyl nucleotide pool could adapt to changing cellular energetic demands and indirectly regulate adenyl nucleotide-dependent metabolic pathways. In vitro, a low activity is also observed with guanyl and pyrimidine nucleotides. May play a role in protecting cells against oxidative stress-induced cell death, by buffering calcium levels in the mitochondrial matrix through the formation of calcium-phosphate precipitates. The sequence is that of Mitochondrial adenyl nucleotide antiporter SLC25A24 (SLC25A24) from Oryctolagus cuniculus (Rabbit).